We begin with the raw amino-acid sequence, 558 residues long: Receptor-like kinase LIP2 (558 aa).

The segment at 1 to 45 (MHCFPCFSSPKNKKSSTTNETNDNNEPKPDDRRRAEETEEIEQSE) is disordered. Low complexity predominate over residues 15-24 (SSTTNETNDN). Residues 25–36 (NEPKPDDRRRAE) show a composition bias toward basic and acidic residues. Position 53 is a phosphothreonine (threonine 53). The region spanning 64 to 343 (FRQECLLGEG…SDVMVALSFL (280 aa)) is the Protein kinase domain. ATP-binding positions include 70–78 (LGEGGFGRV) and lysine 93. Tyrosine 138 is modified (phosphotyrosine). The Proton acceptor role is filled by aspartate 191. Serine 195 and serine 227 each carry phosphoserine. Threonine 233 carries the phosphothreonine modification. Tyrosine 241 bears the Phosphotyrosine mark. The tract at residues 372–558 (HDSNLVSPPP…SDVAIDSIKE (187 aa)) is disordered. Residues 401-418 (ESEKESVSKNEYKKKHEE) show a composition bias toward basic and acidic residues. Residues 419–431 (EDSSMESDDESDS) show a composition bias toward acidic residues. Basic and acidic residues predominate over residues 432–448 (NSEHEKDQPPKPIDEKN). Low complexity predominate over residues 473-486 (SKSSQKSNDESTSS). Basic and acidic residues-rich tracts occupy residues 488-500 (YDSD…KGKE), 508-524 (EEKH…KTDD), and 547-558 (IKSDVAIDSIKE).

Belongs to the protein kinase superfamily. Ser/Thr protein kinase family. Interacts with PRK6. Post-translationally, palmitoylated. In terms of tissue distribution, expressed in mature pollen and in germinating pollen tubes.

Its subcellular location is the cell membrane. Its function is as follows. Involved in pollen tube guidance into micropyle. Participates in perception of the ovule-secreted peptide signal LURE1. This is Receptor-like kinase LIP2 from Arabidopsis thaliana (Mouse-ear cress).